The sequence spans 508 residues: 25-hydroxyvitamin D-1 alpha hydroxylase, mitochondrial (508 aa).

A heme-binding site is contributed by Cys-455.

It belongs to the cytochrome P450 family. It depends on heme as a cofactor. As to expression, kidney.

It is found in the mitochondrion membrane. The catalysed reaction is calcidiol + 2 reduced [adrenodoxin] + O2 + 2 H(+) = calcitriol + 2 oxidized [adrenodoxin] + H2O. It carries out the reaction secalciferol + 2 reduced [adrenodoxin] + O2 + 2 H(+) = calcitetrol + 2 oxidized [adrenodoxin] + H2O. The enzyme catalyses 25-hydroxy-24-oxocalciol + 2 reduced [adrenodoxin] + O2 + 2 H(+) = (1S)-1,25-dihydroxy-24-oxocalciol + 2 oxidized [adrenodoxin] + H2O. It catalyses the reaction 25-hydroxyvitamin D2 + 2 reduced [adrenodoxin] + O2 + 2 H(+) = 1alpha,25-dihydroxyvitamin D2 + 2 oxidized [adrenodoxin] + H2O. The protein operates within hormone biosynthesis; vitamin D biosynthesis. Its activity is regulated as follows. Activated by cardiolipin and dioleoyl phosphatidylethanolamine (DOPE), phospholipids found in the inner mitochondrial membrane. Inhibited by high substrate concentration. Functionally, a cytochrome P450 monooxygenase involved in vitamin D metabolism and in calcium and phosphorus homeostasis. Catalyzes the rate-limiting step in the activation of vitamin D in the kidney, namely the hydroxylation of 25-hydroxyvitamin D3/calcidiol at the C1alpha-position to form the hormonally active form of vitamin D3, 1alpha,25-dihydroxyvitamin D3/calcitriol that acts via the vitamin D receptor (VDR). Has 1alpha-hydroxylase activity on vitamin D intermediates of the CYP24A1-mediated inactivation pathway. Converts 24R,25-dihydroxyvitamin D3/secalciferol to 1-alpha,24,25-trihydroxyvitamin D3, an active ligand of VDR. Also active on 25-hydroxyvitamin D2. Mechanistically, uses molecular oxygen inserting one oxygen atom into a substrate, and reducing the second into a water molecule, with two electrons provided by NADPH via FDXR/adrenodoxin reductase and FDX1/adrenodoxin. This chain is 25-hydroxyvitamin D-1 alpha hydroxylase, mitochondrial (CYP27B1), found in Homo sapiens (Human).